The chain runs to 1203 residues: Regulator of telomere elongation helicase 1 (1203 aa).

Residues 7 to 296 form the Helicase ATP-binding domain; sequence NGVTVDFPFQ…ARVTQQGELQ (290 aa). Position 42 to 49 (42 to 49) interacts with ATP; sequence SPTGTGKT. The [4Fe-4S] cluster site is built by Cys-145, Cys-163, Cys-172, and Cys-207. Positions 151 to 167 match the Nuclear localization signal motif; it reads KKQESNHMQISLCRKKV. Residues 250–253 carry the DEAH box motif; sequence DEAH. Positions 871 to 877 match the Nuclear localization signal motif; it reads QKGGRKK. Disordered regions lie at residues 998–1020 and 1120–1203; these read QLDP…TSKG and TTGK…RSKQ. Over residues 1004–1020 the composition is skewed to polar residues; it reads HLNQGQPHLSAHPTSKG. The span at 1123–1134 shows a compositional bias: basic and acidic residues; that stretch reads KDLELEGPRDES. The PIP-box motif lies at 1160 to 1167; it reads QSKISSFF. Positions 1169-1181 are enriched in basic and acidic residues; that stretch reads QRPDESVRSDDTT.

This sequence belongs to the helicase family. RAD3/XPD subfamily. Interacts with TERF1. Interacts (via PIP-box) with PCNA; the interaction is direct and essential for suppressing telomere fragility. Interacts with MMS19; the interaction mediates the association of RTEL1 with the cytosolic iron-sulfur protein assembly (CIA) complex. Widely expressed. Expressed in spleen, thymus, Peyer patches, kidney, and intestine. Not expressed in brain, heart, lung, skeletal muscles, skin and white fat. In the adult gonad, it is highly expressed in the testis, mainly in the spermatogonia and meiotic spermatocytes.

Its subcellular location is the nucleus. It carries out the reaction ATP + H2O = ADP + phosphate + H(+). In terms of biological role, a probable ATP-dependent DNA helicase implicated in telomere-length regulation, DNA repair and the maintenance of genomic stability. Acts as an anti-recombinase to counteract toxic recombination and limit crossover during meiosis. Regulates meiotic recombination and crossover homeostasis by physically dissociating strand invasion events and thereby promotes noncrossover repair by meiotic synthesis dependent strand annealing (SDSA) as well as disassembly of D loop recombination intermediates. Also disassembles T loops and prevents telomere fragility by counteracting telomeric G4-DNA structures, which together ensure the dynamics and stability of the telomere. This is Regulator of telomere elongation helicase 1 from Mus musculus (Mouse).